The chain runs to 559 residues: Excitatory amino acid transporter 5 (559 aa).

At 1–16 (MVLDAVLARGRTVCKH) the chain is on the cytoplasmic side. The next 3 helical transmembrane spans lie at 17–37 (NGLL…GFFL), 60–80 (MLKM…LASL), and 94–114 (AYYL…VSII). At 115–215 (HPGGAAQKET…EIVYKSEPGT (101 aa)) the chain is on the extracellular side. An N-linked (GlcNAc...) asparagine glycan is attached at N190. Residues 216-236 (SDGMNVLGIVIFSATMGIMLG) form a helical membrane-spanning segment. N-linked (GlcNAc...) asparagine glycosylation occurs at N253. The next 6 membrane-spanning stretches (helical) occupy residues 259-279 (IVAV…AGKI), 298-318 (TVVC…YFLI), 329-349 (GVLQ…TLPI), 371-391 (VGAT…AIFI), 413-433 (AASI…VIVL), and 456-476 (FRTM…AHIC).

It belongs to the dicarboxylate/amino acid:cation symporter (DAACS) (TC 2.A.23) family. SLC1A7 subfamily. Interacts with the PDZ domains of DLG4. In terms of tissue distribution, expressed in retina, located in both cone and rod photoreceptor terminals and in axon terminals of rod bipolar cells.

The protein resides in the photoreceptor inner segment membrane. The protein localises to the synaptic cell membrane. It carries out the reaction K(+)(in) + L-glutamate(out) + 3 Na(+)(out) + H(+)(out) = K(+)(out) + L-glutamate(in) + 3 Na(+)(in) + H(+)(in). It catalyses the reaction K(+)(in) + L-aspartate(out) + 3 Na(+)(out) + H(+)(out) = K(+)(out) + L-aspartate(in) + 3 Na(+)(in) + H(+)(in). The enzyme catalyses D-aspartate(out) + K(+)(in) + 3 Na(+)(out) + H(+)(out) = D-aspartate(in) + K(+)(out) + 3 Na(+)(in) + H(+)(in). Sodium-dependent, high-affinity amino acid transporter that mediates the uptake of L-glutamate and also L-aspartate and D-aspartate. Functions as a symporter that transports one amino acid molecule together with two or three Na(+) ions and one proton, in parallel with the counter-transport of one K(+) ion. Acts primarily as an inhibitory glutamate-gated chloride channel being a major inhibitory presynaptic receptor at mammalian rod bipolar cell axon terminals. Glutamate binding gates a large Cl(-) conductance that mediates inhibition, affecting visual processing in the retina. This is Excitatory amino acid transporter 5 from Mus musculus (Mouse).